The primary structure comprises 275 residues: NAD(P)H dehydrogenase [quinone] 1 (275 aa).

FAD contacts are provided by residues His-13, 19–20 (FN), and Gln-68. Ser-83 carries the phosphoserine modification. 105–108 (LQWF) lines the FAD pocket. 127-129 (AYT) serves as a coordination point for substrate. FAD contacts are provided by residues 149 to 152 (TTGG), Tyr-157, and Arg-202. The segment at 226 to 275 (PSSLFDLNFQAGFLLKKEIEDEQKNNKYGLSVGHHLGKPIPTDNQIKARK) is important for apoenzyme conformational stability. Residue Lys-252 forms a Glycyl lysine isopeptide (Lys-Gly) (interchain with G-Cter in SUMO2) linkage.

It belongs to the NAD(P)H dehydrogenase (quinone) family. As to quaternary structure, homodimer. Interacts with PDLIM4 isoform 2; this interaction stabilizes PDLIM4 isoform 2 in response to oxidative stress and protects it from ubiquitin-independent degradation by the core 20S proteasome. Interacts with TP73 (via SAM domain); this interaction is NADH-dependent, stabilizes TP73 in response to oxidative stress and protects it from ubiquitin-independent degradation by the 20S proteasome. Interacts with TP53; this interaction is NADH-dependent, stabilizes TP53 in response to oxidative stress and protects it from ubiquitin-independent degradation by the 20S proteasome. Requires FAD as cofactor.

The protein localises to the cytoplasm. Its subcellular location is the cytosol. The catalysed reaction is a quinone + NADH + H(+) = a quinol + NAD(+). It catalyses the reaction a quinone + NADPH + H(+) = a quinol + NADP(+). The enzyme catalyses ubiquinone-10 + NADH + H(+) = ubiquinol-10 + NAD(+). It carries out the reaction menadione + NADH + H(+) = menadiol + NAD(+). Functionally, flavin-containing quinone reductase that catalyzes two-electron reduction of quinones to hydroquinones using either NADH or NADPH as electron donors. In a ping-pong kinetic mechanism, the electrons are sequentially transferred from NAD(P)H to flavin cofactor and then from reduced flavin to the quinone, bypassing the formation of semiquinone and reactive oxygen species. Regulates cellular redox state primarily through quinone detoxification. Reduces components of plasma membrane redox system such as coenzyme Q and vitamin quinones, producing antioxidant hydroquinone forms. In the process may function as superoxide scavenger to prevent hydroquinone oxidation and facilitate excretion. Alternatively, can activate quinones and their derivatives by generating redox reactive hydroquinones with DNA cross-linking antitumor potential. Acts as a gatekeeper of the core 20S proteasome known to degrade proteins with unstructured regions. Upon oxidative stress, interacts with tumor suppressors TP53 and TP73 in a NADH-dependent way and inhibits their ubiquitin-independent degradation by the 20S proteasome. The polypeptide is NAD(P)H dehydrogenase [quinone] 1 (NQO1) (Cavia porcellus (Guinea pig)).